Reading from the N-terminus, the 311-residue chain is Pyrimidine-specific ribonucleoside hydrolase RihA (311 aa).

His-240 is a catalytic residue.

Belongs to the IUNH family. RihA subfamily.

In terms of biological role, hydrolyzes cytidine or uridine to ribose and cytosine or uracil, respectively. In Salmonella choleraesuis (strain SC-B67), this protein is Pyrimidine-specific ribonucleoside hydrolase RihA.